Consider the following 426-residue polypeptide: Glucan 1,3-beta-glucosidase (426 aa).

Positions 1–20 (MLYPRALLPAAVALASLVLA) are cleaved as a signal peptide. Residue glutamate 208 is the Proton donor of the active site. 2 disulfides stabilise this stretch: cysteine 290/cysteine 416 and cysteine 315/cysteine 343. Glutamate 307 functions as the Nucleophile in the catalytic mechanism.

It belongs to the glycosyl hydrolase 5 (cellulase A) family.

It localises to the secreted. It carries out the reaction Successive hydrolysis of beta-D-glucose units from the non-reducing ends of (1-&gt;3)-beta-D-glucans, releasing alpha-glucose.. Beta-glucanases participate in the metabolism of beta-glucan, the main structural component of the cell wall. It could also function biosynthetically as a transglycosylase. The chain is Glucan 1,3-beta-glucosidase from Blumeria graminis (Powdery mildew).